Here is a 294-residue protein sequence, read N- to C-terminus: Putative ribose uptake protein RbsU (294 aa).

10 helical membrane passes run 5–24 (ALLI…TIAS), 34–56 (ILGS…GIAF), 61–80 (NLWF…IVTF), 90–112 (RAMP…FALG), 121–138 (VLGG…WLTV), 153–170 (QAVI…AYSA), 182–204 (AFVP…LASR), 214–236 (VSYT…LISA), 243–265 (LATG…IWFL), and 275–292 (WVTI…AVTV).

It belongs to the GRP transporter (TC 2.A.7.5) family.

Its subcellular location is the cell membrane. Functionally, could be involved in the uptake of ribose. The protein is Putative ribose uptake protein RbsU (rbsU) of Lactiplantibacillus plantarum (strain ATCC BAA-793 / NCIMB 8826 / WCFS1) (Lactobacillus plantarum).